We begin with the raw amino-acid sequence, 380 residues long: Queuine tRNA-ribosyltransferase (380 aa).

The active-site Proton acceptor is Asp93. Substrate contacts are provided by residues 93 to 97, Asp147, Gln198, and Gly225; that span reads DSGGF. The segment at 256 to 262 is RNA binding; that stretch reads GVGLPSN. Asp275 acts as the Nucleophile in catalysis. Residues 280–284 form an RNA binding; important for wobble base 34 recognition region; sequence ARNGR. Residues Cys313, Cys315, Cys318, and His344 each coordinate Zn(2+).

It belongs to the queuine tRNA-ribosyltransferase family. In terms of assembly, homodimer. Within each dimer, one monomer is responsible for RNA recognition and catalysis, while the other monomer binds to the replacement base PreQ1. Zn(2+) serves as cofactor.

It carries out the reaction 7-aminomethyl-7-carbaguanine + guanosine(34) in tRNA = 7-aminomethyl-7-carbaguanosine(34) in tRNA + guanine. The protein operates within tRNA modification; tRNA-queuosine biosynthesis. Catalyzes the base-exchange of a guanine (G) residue with the queuine precursor 7-aminomethyl-7-deazaguanine (PreQ1) at position 34 (anticodon wobble position) in tRNAs with GU(N) anticodons (tRNA-Asp, -Asn, -His and -Tyr). Catalysis occurs through a double-displacement mechanism. The nucleophile active site attacks the C1' of nucleotide 34 to detach the guanine base from the RNA, forming a covalent enzyme-RNA intermediate. The proton acceptor active site deprotonates the incoming PreQ1, allowing a nucleophilic attack on the C1' of the ribose to form the product. After dissociation, two additional enzymatic reactions on the tRNA convert PreQ1 to queuine (Q), resulting in the hypermodified nucleoside queuosine (7-(((4,5-cis-dihydroxy-2-cyclopenten-1-yl)amino)methyl)-7-deazaguanosine). This chain is Queuine tRNA-ribosyltransferase, found in Clostridium perfringens (strain ATCC 13124 / DSM 756 / JCM 1290 / NCIMB 6125 / NCTC 8237 / Type A).